A 287-amino-acid chain; its full sequence is Very long chain fatty acid elongase 4 (287 aa).

3 helical membrane passes run 33–53 (ILVYCCVLYILLVFMVPEHIM), 64–84 (PFVVWNIGLCLFSICGAYSCV), and 115–135 (FWVFYFILSKIPEMIDTVFLV). Positions 145–149 (HWYHH) match the HxxHH motif motif. Residue histidine 148 is the Nucleophile of the active site. Helical transmembrane passes span 150–170 (LTVAIFCWHAGHALIPSGLWF), 172–192 (TMNYCVHSIMYFYYFMCACGM), 199–219 (IAPFITMMQLLQMVAGTLIVL), and 241–261 (LGLVMYGSYFFLFAVLFGKLY).

This sequence belongs to the ELO family.

It localises to the membrane. It carries out the reaction a very-long-chain acyl-CoA + malonyl-CoA + H(+) = a very-long-chain 3-oxoacyl-CoA + CO2 + CoA. Its function is as follows. Involved in the synthesis of fatty acids. Elongates C16:0 and C18:0 fatty acids to C26:0, with C24:0 being the main product. The protein is Very long chain fatty acid elongase 4 of Trypanosoma cruzi (strain CL Brener).